The sequence spans 601 residues: Elongation factor 4 (601 aa).

Residues 7-189 (DTIRNFSIVA…AIVAKLPPPK (183 aa)) form the tr-type G domain. GTP contacts are provided by residues 19–24 (DHGKST) and 136–139 (NKID).

Belongs to the TRAFAC class translation factor GTPase superfamily. Classic translation factor GTPase family. LepA subfamily.

It is found in the cell inner membrane. The enzyme catalyses GTP + H2O = GDP + phosphate + H(+). Required for accurate and efficient protein synthesis under certain stress conditions. May act as a fidelity factor of the translation reaction, by catalyzing a one-codon backward translocation of tRNAs on improperly translocated ribosomes. Back-translocation proceeds from a post-translocation (POST) complex to a pre-translocation (PRE) complex, thus giving elongation factor G a second chance to translocate the tRNAs correctly. Binds to ribosomes in a GTP-dependent manner. The sequence is that of Elongation factor 4 from Methylobacterium sp. (strain 4-46).